Consider the following 97-residue polypeptide: Co-chaperonin GroES (97 aa).

It belongs to the GroES chaperonin family. Heptamer of 7 subunits arranged in a ring. Interacts with the chaperonin GroEL.

Its subcellular location is the cytoplasm. Functionally, together with the chaperonin GroEL, plays an essential role in assisting protein folding. The GroEL-GroES system forms a nano-cage that allows encapsulation of the non-native substrate proteins and provides a physical environment optimized to promote and accelerate protein folding. GroES binds to the apical surface of the GroEL ring, thereby capping the opening of the GroEL channel. The sequence is that of Co-chaperonin GroES from Proteus mirabilis (strain HI4320).